A 320-amino-acid polypeptide reads, in one-letter code: Aldose reductase (320 aa).

Residue Y60 is the Proton donor of the active site. Residue H121 coordinates substrate. Position 215–269 (215–269 (SPLGSSEKNLAHDPVVEKVANKLNKTPGQVLIKWALQRGTSVIPKSSKDERIKEN)) interacts with NADP(+).

Belongs to the aldo/keto reductase family.

The catalysed reaction is an alditol + NAD(+) = an aldose + NADH + H(+). The enzyme catalyses an alditol + NADP(+) = an aldose + NADPH + H(+). The sequence is that of Aldose reductase from Hordeum vulgare (Barley).